A 100-amino-acid polypeptide reads, in one-letter code: C-X-C motif chemokine 3 (100 aa).

Positions 1 to 31 are cleaved as a signal peptide; it reads MAPPTCRLLSAALVLLLLLATNHQATGAVVA. 2 cysteine pairs are disulfide-bonded: Cys-36/Cys-62 and Cys-38/Cys-78.

It belongs to the intercrine alpha (chemokine CxC) family.

The protein resides in the secreted. Ligand for CXCR2. Has chemotactic activity for neutrophils. May play a role in inflammation and exert its effects on endothelial cells in an autocrine fashion. This Mus musculus (Mouse) protein is C-X-C motif chemokine 3.